The chain runs to 468 residues: Tumor necrosis factor receptor superfamily member 10A (468 aa).

A signal peptide spans 1 to 23 (MAPPPARVHLGAFLAVTPNPGSA). A disordered region spans residues 17–82 (TPNPGSAASG…APGPRPAREA (66 aa)). Low complexity predominate over residues 20 to 34 (PGSAASGTEAAAATP). Residues 24 to 239 (ASGTEAAAAT…VHKESGNGHN (216 aa)) are Extracellular-facing. Arg52 is modified (omega-N-methylarginine). The span at 63–74 (GPSARARAGRAP) shows a compositional bias: low complexity. TNFR-Cys repeat units follow at residues 107–145 (SAATIKLHDQSIGTQQWEHSPLGELCPPGSHRSEHPGAC), 147–188 (RCTE…NTAC), and 189–229 (QCKP…DIEC). 7 disulfides stabilise this stretch: Cys132–Cys145, Cys148–Cys164, Cys167–Cys180, Cys170–Cys188, Cys190–Cys204, Cys207–Cys221, and Cys211–Cys229. N-linked (GlcNAc...) asparagine glycosylation occurs at Asn156. Residues 240–262 (IWVILVVTLVVPLLLVAVLIVCC) form a helical membrane-spanning segment. Over 263 to 468 (CIGSGCGGDP…DGTGSAVSLE (206 aa)) the chain is Cytoplasmic. The 84-residue stretch at 365-448 (MLFFDKFANI…HAREKIQDLL (84 aa)) folds into the Death domain. Phosphoserine occurs at positions 424, 463, and 466.

Monomer. Homooligomers and heterooligomers with TNFRSF10B. Three TNFRSF10A molecules interact with the TNFSF10 homotrimer. Can interact with TRADD and RIPK1. Interacts with ARAP1. In the absence of stimulation, interacts with BIRC2, DDX3X and GSK3B. The interaction with BIRC2 and DDX3X is further enhanced upon receptor stimulation and accompanied by DDX3X and BIRC2 cleavage. Interacts with ZDHHC3. Interacts with PTPN6; this interaction enables the inhibition of T-cell receptor signaling via LCK. In terms of assembly, (Microbial infection) Interacts with HCMV protein UL141; this interaction prevents TNFRSF10A cell surface expression. Post-translationally, palmitoylated. Palmitoylation of TNFRSF10A is required for its association with lipid rafts, oligomerization and function in TRAIL-induced cell death. Palmitoylated by ZDHHC3. In terms of tissue distribution, widely expressed. High levels are found in spleen, peripheral blood leukocytes, small intestine and thymus, but also in K-562 erythroleukemia cells, MCF-7 breast carcinoma cells and activated T-cells.

Its subcellular location is the cell membrane. It is found in the membrane raft. It localises to the cytoplasm. The protein resides in the cytosol. Functionally, receptor for the cytotoxic ligand TNFSF10/TRAIL. The adapter molecule FADD recruits caspase-8 to the activated receptor. The resulting death-inducing signaling complex (DISC) performs caspase-8 proteolytic activation which initiates the subsequent cascade of caspases (aspartate-specific cysteine proteases) mediating apoptosis. Promotes the activation of NF-kappa-B. This is Tumor necrosis factor receptor superfamily member 10A (TNFRSF10A) from Homo sapiens (Human).